An 84-amino-acid chain; its full sequence is Small ribosomal subunit protein bS18 (84 aa).

It belongs to the bacterial ribosomal protein bS18 family. In terms of assembly, part of the 30S ribosomal subunit. Forms a tight heterodimer with protein bS6.

In terms of biological role, binds as a heterodimer with protein bS6 to the central domain of the 16S rRNA, where it helps stabilize the platform of the 30S subunit. This Polynucleobacter necessarius subsp. necessarius (strain STIR1) protein is Small ribosomal subunit protein bS18.